The primary structure comprises 278 residues: MQVRQSIHSDHARQLDTAGLRREFLIEHIFDADACTMTYSHIDRIIVGGVMPVHQAVTVGEDVGKQLGVSYFLERRELGAINIGGAGVVSVDGERYAIGHEEAIYIGKGARDIRFTSVDPAKPARFYYNSAPAHTTFPTRKITAAEASPQTIGDDATSNRRTINKYIVPDVLPTCQLTMGLTKLAEGNLWNTMPCHTHERRMEVYFYFDMDEETAVFHMMGQPQETRHILVHNEQAVISPSWSIHSGVGTKRYTFIWGMVGENQVFSDMDHVKVSELR.

Histidine 196, histidine 198, glutamate 203, and histidine 245 together coordinate Zn(2+).

The protein belongs to the KduI family. Zn(2+) serves as cofactor.

The enzyme catalyses 5-dehydro-4-deoxy-D-glucuronate = 3-deoxy-D-glycero-2,5-hexodiulosonate. The protein operates within glycan metabolism; pectin degradation; 2-dehydro-3-deoxy-D-gluconate from pectin: step 4/5. Catalyzes the isomerization of 5-dehydro-4-deoxy-D-glucuronate to 3-deoxy-D-glycero-2,5-hexodiulosonate. This Dickeya dadantii (strain 3937) (Erwinia chrysanthemi (strain 3937)) protein is 4-deoxy-L-threo-5-hexosulose-uronate ketol-isomerase (kduI).